The primary structure comprises 210 residues: Large ribosomal subunit protein uL4 (210 aa).

Residues 49–76 (HCTKTRSEVSGGGKKPWRQKHTGRARHG) form a disordered region. Positions 63–76 (KPWRQKHTGRARHG) are enriched in basic residues.

The protein belongs to the universal ribosomal protein uL4 family. As to quaternary structure, part of the 50S ribosomal subunit.

Functionally, one of the primary rRNA binding proteins, this protein initially binds near the 5'-end of the 23S rRNA. It is important during the early stages of 50S assembly. It makes multiple contacts with different domains of the 23S rRNA in the assembled 50S subunit and ribosome. Forms part of the polypeptide exit tunnel. The polypeptide is Large ribosomal subunit protein uL4 (Thermodesulfovibrio yellowstonii (strain ATCC 51303 / DSM 11347 / YP87)).